Consider the following 91-residue polypeptide: Elongation factor 1-beta (91 aa).

This sequence belongs to the EF-1-beta/EF-1-delta family.

Functionally, promotes the exchange of GDP for GTP in EF-1-alpha/GDP, thus allowing the regeneration of EF-1-alpha/GTP that could then be used to form the ternary complex EF-1-alpha/GTP/AAtRNA. The chain is Elongation factor 1-beta from Pyrococcus furiosus (strain ATCC 43587 / DSM 3638 / JCM 8422 / Vc1).